A 418-amino-acid chain; its full sequence is L-rhamnose isomerase (418 aa).

Mn(2+)-binding residues include H261, D293, and D295.

It belongs to the rhamnose isomerase family. Mn(2+) serves as cofactor.

It is found in the cytoplasm. It catalyses the reaction L-rhamnopyranose = L-rhamnulose. Its pathway is carbohydrate degradation; L-rhamnose degradation; glycerone phosphate from L-rhamnose: step 1/3. Functionally, catalyzes the interconversion of L-rhamnose and L-rhamnulose. The chain is L-rhamnose isomerase from Clostridium beijerinckii (strain ATCC 51743 / NCIMB 8052) (Clostridium acetobutylicum).